The sequence spans 489 residues: MQRQVVFATSEMYPFSKSGGLGDVLGALPLALHRMGVPTAVVTPFYGRLRTADYPIRLTVSDCHVGYPWAPITCDVFEADYHGMPVYFIHRGEYFDRRYYYNDHKGDYFDNCERFVFFCRALLALMRRLGQPPAVLHAHDWQTALVPAFLYFLRQTDPFWQDTRSVLTIHNLAFQGRFASRLFETSGLPPQAWSVDGAEFWGDFNLLKAGIAYADKVTTVSPSYAREILGPAYGSGLDGILRKRAHALHGILNGADYDIWSPGNDRFLPCRYTPTDLAGKAQCKRALIEELGLDPHLARRPILGFIGRLRGQKGIDLLLDILPRLMESDVGVIILGEGNLTHEARALELMEAYRGRVCTIVSYTEDLAHRIQAGSDIFLMPSRYEPCGLTQMYALRYGTPPVATAVGGLRDTIVPWPSPESTGFTFGRCESAAFLRAILDAVHLWTTAPGDWQGMVRRAMAQAFTWERAGRAYLDLYAQLGVSPGEEGA.

Residue K17 coordinates ADP-alpha-D-glucose.

Belongs to the glycosyltransferase 1 family. Bacterial/plant glycogen synthase subfamily.

It catalyses the reaction [(1-&gt;4)-alpha-D-glucosyl](n) + ADP-alpha-D-glucose = [(1-&gt;4)-alpha-D-glucosyl](n+1) + ADP + H(+). It participates in glycan biosynthesis; glycogen biosynthesis. In terms of biological role, synthesizes alpha-1,4-glucan chains using ADP-glucose. The protein is Glycogen synthase of Nitratidesulfovibrio vulgaris (strain ATCC 29579 / DSM 644 / CCUG 34227 / NCIMB 8303 / VKM B-1760 / Hildenborough) (Desulfovibrio vulgaris).